Consider the following 194-residue polypeptide: Endoribonuclease ToxN (194 aa).

Residues 114-182 (MLKQYLFLKE…DQAKERDKAR (69 aa)) adopt a coiled-coil conformation. Residues 171-182 (ERDQAKERDKAR) show a composition bias toward basic and acidic residues. The interval 171-194 (ERDQAKERDKARRIAYMRQMGRER) is disordered.

Belongs to the ToxN/AbiQ toxin family. In terms of assembly, one ToxN monomer binds to a 34-nt-long single repeat of the ToxI RNA; this complex forms a triangular heterohexameric complex with ToxN connected by the ToxI RNA to another toxin molecule. The ToxI repeats are cleavage products of their precursor. The ToxI repeat forms a pseudoknot which occludes the toxin active site.

In terms of biological role, toxic component of a type III toxin-antitoxin (TA) system. An endoribonuclease which cleaves between the first and second A of AAAAA sequences; it tolerates other nucleotides in positions +2 and +4 of the consensus. Digests cognate antitoxin RNA ToxI as shown by the 2'-3'-cyclic phosphate at the 3' end of the 34-nt repeats and probably other RNAs. Inhibits growth when expressed in E.coli without causing cell lysis; this bacteriostatic effect is neutralized by cognate RNA antitoxin ToxI, which has 2.9 nearly identical 34 nucleotide-long repeats. Non-cognate antitoxin RNA from P.atrosepticum does not inhibit this toxin. The toxin-antitoxin pair function in plasmid maintenance (a plasmid addiction system), but unlike its P.atrosepticum homolog it is not seen to confer resistance to bacteriophages. In Bacillus thuringiensis subsp. kurstaki, this protein is Endoribonuclease ToxN.